The following is a 633-amino-acid chain: Probable potassium transport system protein Kup 3 (633 aa).

12 consecutive transmembrane segments (helical) span residues 24-44, 61-81, 114-134, 148-168, 180-200, 222-242, 258-278, 298-318, 348-368, 377-397, 405-425, and 427-447; these read LVLAALGVVYGDIGTSPLYAF, VLGILSLIVWALTIVVTLKYV, LVLGVIGASLFLGDAIITPAI, PALSNWVVPITLTIIAVLFFV, FGPVTALWFIVLGVSGAIHIF, IGSAIAVLGAVFLAVTGAEAL, WFSLVFPSLLLNYFGQGAFVL, IPMVCLATAATVIASQAVISG, IFMPQVNNLLFIFVAALVLFF, AYGIAVTGEMFITSILLFIVM, LTAALAVIVPITLIDAGFLAA, and IAKFAEGGWVPVAVASTMALI.

Belongs to the HAK/KUP transporter (TC 2.A.72) family.

The protein localises to the cell inner membrane. It catalyses the reaction K(+)(in) + H(+)(in) = K(+)(out) + H(+)(out). Its function is as follows. Transport of potassium into the cell. Likely operates as a K(+):H(+) symporter. The chain is Probable potassium transport system protein Kup 3 from Rhizobium johnstonii (strain DSM 114642 / LMG 32736 / 3841) (Rhizobium leguminosarum bv. viciae).